The sequence spans 448 residues: Mitochondrial distribution and morphology protein 10 (448 aa).

The protein belongs to the MDM10 family. In terms of assembly, component of the ER-mitochondria encounter structure (ERMES) or MDM complex, composed of MMM1, MDM10, MDM12 and MDM34. Associates with the mitochondrial outer membrane sorting assembly machinery SAM(core) complex.

Its subcellular location is the mitochondrion outer membrane. In terms of biological role, component of the ERMES/MDM complex, which serves as a molecular tether to connect the endoplasmic reticulum and mitochondria. Components of this complex are involved in the control of mitochondrial shape and protein biogenesis and may function in phospholipid exchange. MDM10 is involved in the late assembly steps of the general translocase of the mitochondrial outer membrane (TOM complex). Functions in the TOM40-specific route of the assembly of outer membrane beta-barrel proteins, including the association of TOM40 with the receptor TOM22 and small TOM proteins. Can associate with the SAM(core) complex as well as the MDM12-MMM1 complex, both involved in late steps of the major beta-barrel assembly pathway, that is responsible for biogenesis of all outer membrane beta-barrel proteins. May act as a switch that shuttles between both complexes and channels precursor proteins into the TOM40-specific pathway. Plays a role in mitochondrial morphology and in the inheritance of mitochondria. The protein is Mitochondrial distribution and morphology protein 10 of Podospora anserina (strain S / ATCC MYA-4624 / DSM 980 / FGSC 10383) (Pleurage anserina).